We begin with the raw amino-acid sequence, 153 residues long: Arginine repressor (153 aa).

Belongs to the ArgR family.

The protein localises to the cytoplasm. It functions in the pathway amino-acid biosynthesis; L-arginine biosynthesis [regulation]. Regulates arginine biosynthesis genes. This Syntrophomonas wolfei subsp. wolfei (strain DSM 2245B / Goettingen) protein is Arginine repressor.